The chain runs to 121 residues: Small ribosomal subunit protein uS13 (121 aa).

A disordered region spans residues 97–121; the sequence is VRGQRTRTNARTRRGARKTVAGKKK. A compositionally biased stretch (basic residues) spans 100-121; sequence QRTRTNARTRRGARKTVAGKKK.

This sequence belongs to the universal ribosomal protein uS13 family. In terms of assembly, part of the 30S ribosomal subunit. Forms a loose heterodimer with protein S19. Forms two bridges to the 50S subunit in the 70S ribosome.

Located at the top of the head of the 30S subunit, it contacts several helices of the 16S rRNA. In the 70S ribosome it contacts the 23S rRNA (bridge B1a) and protein L5 of the 50S subunit (bridge B1b), connecting the 2 subunits; these bridges are implicated in subunit movement. Contacts the tRNAs in the A and P-sites. This is Small ribosomal subunit protein uS13 from Prochlorococcus marinus (strain MIT 9313).